A 495-amino-acid polypeptide reads, in one-letter code: ATP synthase subunit beta (495 aa).

Position 178–185 (178–185 (GGAGVGKT)) interacts with ATP.

The protein belongs to the ATPase alpha/beta chains family. F-type ATPases have 2 components, CF(1) - the catalytic core - and CF(0) - the membrane proton channel. CF(1) has five subunits: alpha(3), beta(3), gamma(1), delta(1), epsilon(1). CF(0) has three main subunits: a(1), b(2) and c(9-12). The alpha and beta chains form an alternating ring which encloses part of the gamma chain. CF(1) is attached to CF(0) by a central stalk formed by the gamma and epsilon chains, while a peripheral stalk is formed by the delta and b chains.

Its subcellular location is the cell membrane. It catalyses the reaction ATP + H2O + 4 H(+)(in) = ADP + phosphate + 5 H(+)(out). Its function is as follows. Produces ATP from ADP in the presence of a proton gradient across the membrane. The catalytic sites are hosted primarily by the beta subunits. This is ATP synthase subunit beta from Bifidobacterium animalis subsp. lactis (strain AD011).